A 90-amino-acid polypeptide reads, in one-letter code: Small ribosomal subunit protein bS20 (90 aa).

Belongs to the bacterial ribosomal protein bS20 family.

Functionally, binds directly to 16S ribosomal RNA. The polypeptide is Small ribosomal subunit protein bS20 (Roseiflexus sp. (strain RS-1)).